The primary structure comprises 276 residues: MDLWTALQALILGVVEGLTEFLPISSTGHQIIVADLLDFGGERAMAFNIIIQLGAILAVVWEFRRKILDVVIGLPTQPSARRFTANLLIAFLPAVVLGVIFADLIHHYLFNPITVAAALVVGGIVMLWAEQRQHEVHAETVDEIRWTDALKIGFAQCLAMIPGTSRSGSTIIGGLLFGLSRKTATEFSFFLAMPTMVGAAVYSGYKYRDLFVPADFPVFAIGFVTAFIFAMIAVRGLLKFIGSHSYAAFAWYRIVFGLVILATWQFGWVDWTAAQP.

Helical transmembrane passes span 43–63 (RAMAFNIIIQLGAILAVVWEF), 85–105 (ANLLIAFLPAVVLGVIFADLI), 109–129 (LFNPITVAAALVVGGIVMLWA), 184–204 (ATEFSFFLAMPTMVGAAVYSG), 214–234 (ADFPVFAIGFVTAFIFAMIAV), and 254–274 (IVFGLVILATWQFGWVDWTAA).

The protein belongs to the UppP family.

The protein resides in the cell inner membrane. It catalyses the reaction di-trans,octa-cis-undecaprenyl diphosphate + H2O = di-trans,octa-cis-undecaprenyl phosphate + phosphate + H(+). Functionally, catalyzes the dephosphorylation of undecaprenyl diphosphate (UPP). Confers resistance to bacitracin. This chain is Undecaprenyl-diphosphatase 1, found in Pseudomonas fluorescens (strain Pf0-1).